Here is a 354-residue protein sequence, read N- to C-terminus: MGSGASAEDKELAKRSKELEKKLQEDADKEAKTVKLLLLGAGESGKSTIVKQMKIIHQDGYSPEECLEYKAIIYGNVLQSILAIIRAMPTLGIDYAEVSCVDNGRQLNNLADSIEEGTMPPELVEVIRKLWKDGGVQACFDRAAEYQLNDSASYYLNQLDRITAPDYLPNEQDVLRSRVKTTGIIETKFSVKDLNFRMFDVGGQRSERKKWIHCFEGVTCIIFCAALSAYDMVLVEDDEVNRMHESLHLFNSICNHKFFAATSIVLFLNKKDLFEEKIKKVHLSICFPEYDGNNSYEDAGNYIKSQFLDLNMRKDVKEIYSHMTCATDTQNVKFVFDAVTDIIIKENLKDCGLF.

Residues 1-27 form a disordered region; the sequence is MGSGASAEDKELAKRSKELEKKLQEDA. Gly-2 carries the N-myristoyl glycine lipid modification. A compositionally biased stretch (basic and acidic residues) spans 7–27; that stretch reads AEDKELAKRSKELEKKLQEDA. The 323-residue stretch at 32–354 folds into the G-alpha domain; that stretch reads KTVKLLLLGA…KENLKDCGLF (323 aa). Positions 35–48 are G1 motif; the sequence is KLLLLGAGESGKST. GTP contacts are provided by residues 40–47, 175–181, 200–204, 269–272, and Ala-326; these read GAGESGKS, LRSRVKT, DVGGQ, and NKKD. Mg(2+) contacts are provided by Ser-47 and Thr-181. Positions 173–181 are G2 motif; sequence DVLRSRVKT. A G3 motif region spans residues 196-205; it reads FRMFDVGGQR. The tract at residues 265 to 272 is G4 motif; sequence VLFLNKKD. The tract at residues 324–329 is G5 motif; sequence TCATDT.

Belongs to the G-alpha family. G(i/o/t/z) subfamily. As to quaternary structure, g proteins are composed of 3 units; alpha, beta and gamma. The alpha chain contains the guanine nucleotide binding site. As to expression, retinal rod outer segment.

Its subcellular location is the cell projection. It localises to the cilium. The protein localises to the photoreceptor outer segment. The protein resides in the photoreceptor inner segment. In terms of biological role, guanine nucleotide-binding proteins (G proteins) are involved as modulators or transducers in various transmembrane signaling systems. Transducin is an amplifier and one of the transducers of a visual impulse that performs the coupling between rhodopsin and cGMP-phosphodiesterase. The polypeptide is Guanine nucleotide-binding protein G(t) subunit alpha-2 (GNAT2) (Bos taurus (Bovine)).